A 185-amino-acid polypeptide reads, in one-letter code: Transposon Tn3 resolvase (185 aa).

The region spanning 2-137 (RIFGYARVST…EGRQEAKLKG (136 aa)) is the Resolvase/invertase-type recombinase catalytic domain. Ser-10 serves as the catalytic O-(5'-phospho-DNA)-serine intermediate. Positions 161 to 180 (ATEIAHQLSIARSTVYKILE) form a DNA-binding region, H-T-H motif.

This sequence belongs to the site-specific recombinase resolvase family.

Resolvase catalyzes the resolution (a site-specific recombination) of the cointegrated replicon to yield the final transposition products. The chain is Transposon Tn3 resolvase (tnpR) from Escherichia coli.